We begin with the raw amino-acid sequence, 491 residues long: Peptidoglycan D,D-transpeptidase PbpA (491 aa).

Residues methionine 1 to arginine 7 lie on the Cytoplasmic side of the membrane. A helical; Signal-anchor for type II membrane protein transmembrane segment spans residues isoleucine 8–valine 28. The Periplasmic segment spans residues phenylalanine 29–proline 491. The transpeptidase stretch occupies residues glycine 160–glutamate 484. Serine 222 acts as the Acyl-ester intermediate in catalysis.

It belongs to the transpeptidase family.

Its subcellular location is the cell inner membrane. It catalyses the reaction Preferential cleavage: (Ac)2-L-Lys-D-Ala-|-D-Ala. Also transpeptidation of peptidyl-alanyl moieties that are N-acyl substituents of D-alanine.. It participates in cell wall biogenesis; peptidoglycan biosynthesis. Functionally, transpeptidase that catalyzes cross-linking of the peptidoglycan cell wall. Required for the regulation of cell length. The chain is Peptidoglycan D,D-transpeptidase PbpA (pbpA) from Mycobacterium tuberculosis (strain CDC 1551 / Oshkosh).